Here is a 130-residue protein sequence, read N- to C-terminus: uncharacterized protein (130 aa).

The N-terminal stretch at 1-23 (MINRKVVYALSALLLFVYSYAFI) is a signal peptide.

This is an uncharacterized protein from Aquifex aeolicus (strain VF5).